A 714-amino-acid chain; its full sequence is Polyribonucleotide nucleotidyltransferase (714 aa).

Asp489 and Asp495 together coordinate Mg(2+). The 60-residue stretch at 556-615 folds into the KH domain; sequence PKIDTIKIDVDKIKVVIGKGGETIDKIIAETGVKIDIDEEGNVSIYSSDQDAINRAKEII. The S1 motif domain occupies 625–693; that stretch reads GEVYHAKVVR…DKGRIDASMK (69 aa). The tract at residues 691–714 is disordered; that stretch reads SMKALVPRPPKPEKSEAKKEGKHD. Basic and acidic residues predominate over residues 700–714; the sequence is PKPEKSEAKKEGKHD.

Belongs to the polyribonucleotide nucleotidyltransferase family. The cofactor is Mg(2+).

Its subcellular location is the cytoplasm. It catalyses the reaction RNA(n+1) + phosphate = RNA(n) + a ribonucleoside 5'-diphosphate. Functionally, involved in mRNA degradation. Catalyzes the phosphorolysis of single-stranded polyribonucleotides processively in the 3'- to 5'-direction. This Streptococcus equi subsp. zooepidemicus (strain MGCS10565) protein is Polyribonucleotide nucleotidyltransferase.